A 34-amino-acid polypeptide reads, in one-letter code: Potassium channel toxin (34 aa).

3 disulfides stabilise this stretch: Cys6/Cys25, Cys11/Cys29, and Cys15/Cys31.

Belongs to the short scorpion toxin superfamily. Potassium channel inhibitor family. Alpha-KTx 21 subfamily. As to expression, expressed by the venom gland.

It localises to the secreted. Its function is as follows. Toxin that blocks voltage-gated potassium channels (Kv). The protein is Potassium channel toxin of Tityus metuendus (Scorpion).